A 657-amino-acid chain; its full sequence is Zinc transporter ZIP4 (657 aa).

The N-terminal stretch at M1 to M22 is a signal peptide. Residues V23–Y335 lie on the Extracellular side of the membrane. N-linked (GlcNAc...) asparagine glycans are attached at residues N193, N220, and N268. A helical transmembrane segment spans residues L336–L356. Over T357–S374 the chain is Cytoplasmic. The chain crosses the membrane as a helical span at residues L375–L395. Over H396–R417 the chain is Extracellular. A helical transmembrane segment spans residues L418–L438. Over L439 to Y508 the chain is Cytoplasmic. The short motif at L462–L464 is the Essential for SLC39A4 endocytosis element. The tract at residues S467–L491 is disordered. A helical membrane pass occupies residues L509 to A528. Zn(2+)-binding residues include H517, N518, and D521. Residues F529–G536 are Extracellular-facing. The chain crosses the membrane as a helical span at residues L537–L563. Positions 546, 547, and 550 each coordinate Zn(2+). Topologically, residues T564–A568 are cytoplasmic. The helical transmembrane segment at L569–V589 threads the bilayer. Topologically, residues G590–T597 are extracellular. A helical membrane pass occupies residues W598–A618. Residues M619–P627 lie on the Cytoplasmic side of the membrane. Residues W628–L648 form a helical membrane-spanning segment. The Extracellular portion of the chain corresponds to S649 to F657.

It belongs to the ZIP transporter (TC 2.A.5) family. Homodimer; homodimerization is mediated by the transmembrane domain. The extracellular N-terminal ectodomain is cleaved when cells are Zn(2+) deficient, N-terminally cleaved SLC39A4 is internalized at a faster rate. Post-translationally, under excess Zn(2+) conditions, SLC39A4 on the cell surface is rapidly endocytosed, ubiquitinated and degraded. In terms of processing, glycosylated. In terms of tissue distribution, expressed in duodenum, jejunum, and ileum.

The protein localises to the cell membrane. It localises to the recycling endosome membrane. It is found in the apical cell membrane. It catalyses the reaction Zn(2+)(in) = Zn(2+)(out). Its function is as follows. Selective transporter that mediates the uptake of Zn(2+). Plays an essential role for dietary zinc uptake from small intestine. The Zn(2+) uniporter activity is regulated by zinc availability. Also exhibits polyspecific binding and transport of Cu(2+), Cd(2+) and possibly Ni(2+) but at higher concentrations. This is Zinc transporter ZIP4 (Slc39a4) from Rattus norvegicus (Rat).